A 208-amino-acid polypeptide reads, in one-letter code: Protein-L-isoaspartate O-methyltransferase (208 aa).

The active site involves S59.

The protein belongs to the methyltransferase superfamily. L-isoaspartyl/D-aspartyl protein methyltransferase family.

Its subcellular location is the cytoplasm. It carries out the reaction [protein]-L-isoaspartate + S-adenosyl-L-methionine = [protein]-L-isoaspartate alpha-methyl ester + S-adenosyl-L-homocysteine. Functionally, catalyzes the methyl esterification of L-isoaspartyl residues in peptides and proteins that result from spontaneous decomposition of normal L-aspartyl and L-asparaginyl residues. It plays a role in the repair and/or degradation of damaged proteins. The protein is Protein-L-isoaspartate O-methyltransferase of Escherichia coli O7:K1 (strain IAI39 / ExPEC).